The primary structure comprises 419 residues: MVEQDPFEIAVKQLERAAQYMDISEEALEFLKRPQRIVEVSIPVEMDDGSVKVFTGFRVQYNWARGPTKGGIRWHPEETLSTVKALAAWMTWKTAVMDLPYGGGKGGVICNPKEMSDREKERLARGYVRAIYDVISPYTDIPAPDVYTNPQIMAWMMDEYETISRRKDPSFGVITGKPPSVGGIVARMDATARGASYTVREAAKALGMDLKGKTIAIQGYGNAGYYMAKIMSEEYGMKVVAVSDSKGGIYNPDGLNADEVLAWKKKTGSVKDFPGATNITNEELLELEVDVLAPSAIEEVITKKNADNIKAKIVAELANGPTTPEADEILYEKGILIIPDFLCNAGGVTVSYFEWVQNITGDYWTVEETRAKLDKKMTKAFWDVYNTHKEKNINMRDAAYVVAVSRVYQAMKDRGWIKK.

Lys-105 is a catalytic residue. 219 to 225 lines the NAD(+) pocket; it reads GYGNAGY.

It belongs to the Glu/Leu/Phe/Val dehydrogenases family. Homohexamer.

Its subcellular location is the cytoplasm. It carries out the reaction L-glutamate + NAD(+) + H2O = 2-oxoglutarate + NH4(+) + NADH + H(+). The catalysed reaction is L-glutamate + NADP(+) + H2O = 2-oxoglutarate + NH4(+) + NADPH + H(+). The chain is Glutamate dehydrogenase (gdhA) from Thermococcus litoralis (strain ATCC 51850 / DSM 5473 / JCM 8560 / NS-C).